The primary structure comprises 154 residues: SsrA-binding protein (154 aa).

Belongs to the SmpB family.

It localises to the cytoplasm. Its function is as follows. Required for rescue of stalled ribosomes mediated by trans-translation. Binds to transfer-messenger RNA (tmRNA), required for stable association of tmRNA with ribosomes. tmRNA and SmpB together mimic tRNA shape, replacing the anticodon stem-loop with SmpB. tmRNA is encoded by the ssrA gene; the 2 termini fold to resemble tRNA(Ala) and it encodes a 'tag peptide', a short internal open reading frame. During trans-translation Ala-aminoacylated tmRNA acts like a tRNA, entering the A-site of stalled ribosomes, displacing the stalled mRNA. The ribosome then switches to translate the ORF on the tmRNA; the nascent peptide is terminated with the 'tag peptide' encoded by the tmRNA and targeted for degradation. The ribosome is freed to recommence translation, which seems to be the essential function of trans-translation. This chain is SsrA-binding protein, found in Methylobacillus flagellatus (strain ATCC 51484 / DSM 6875 / VKM B-1610 / KT).